An 82-amino-acid chain; its full sequence is RNA-binding protein Hfq (82 aa).

In terms of domain architecture, Sm spans 9 to 68 (DPFLNTLRKEHVPVSIYLVNGIKLQGKVDSFDQYVIMLKNTVSQMVYKHAISTIVPGRPV).

This sequence belongs to the Hfq family. Homohexamer.

Functionally, RNA chaperone that binds small regulatory RNA (sRNAs) and mRNAs to facilitate mRNA translational regulation in response to envelope stress, environmental stress and changes in metabolite concentrations. Also binds with high specificity to tRNAs. The protein is RNA-binding protein Hfq of Methylococcus capsulatus (strain ATCC 33009 / NCIMB 11132 / Bath).